The chain runs to 507 residues: Carboxypeptidase sxa2 (507 aa).

The first 22 residues, 1–22 (MLSLFLKSLFAIIIIELTIIHA), serve as a signal peptide directing secretion. Residues Asn38 and Asn45 are each glycosylated (N-linked (GlcNAc...) asparagine). Residues 41-64 (SASSNQTVQPRQHAAPSSDRIKSL) are disordered. The active site involves Ser200. N-linked (GlcNAc...) asparagine glycosylation is found at Asn259, Asn260, and Asn300. Asp434 is an active-site residue. Asn448 carries N-linked (GlcNAc...) asparagine glycosylation. His487 is an active-site residue.

The protein belongs to the peptidase S10 family.

The protein resides in the secreted. In terms of biological role, involved in degradation or processing of the mating pheromones. Its loss causes a persistent response to the pheromones. It may be required for stabilization of enzymes that are essential for zygote formation. May degrade the mating pheromone P-factor. In Schizosaccharomyces pombe (strain 972 / ATCC 24843) (Fission yeast), this protein is Carboxypeptidase sxa2 (sxa2).